We begin with the raw amino-acid sequence, 197 residues long: Protein Hikeshi (197 aa).

The interval 18–55 (VAEDKFVFDLPDYENINHVVVFMLGTVPFPEGMGGSVY) is required for F-X-F-G repeats-nucleoporins recognition and nuclear import. Residues 124–134 (QTPVGNAAVSS) are flexible linker region involved in nuclear import of HSP70 proteins.

It belongs to the OPI10 family. As to quaternary structure, forms an asymmetric homodimer; required for binding and nuclear import of HSP70 proteins. Interacts with ATP-bound HSP70 proteins. Interacts with NUP62 and NUP153 (via F-X-F-G repeats). Interacts with HSPA8.

It is found in the cytoplasm. Its subcellular location is the cytosol. It localises to the nucleus. Acts as a specific nuclear import carrier for HSP70 proteins following heat-shock stress: acts by mediating the nucleoporin-dependent translocation of ATP-bound HSP70 proteins into the nucleus. HSP70 proteins import is required to protect cells from heat shock damages. Does not translocate ADP-bound HSP70 proteins into the nucleus. This chain is Protein Hikeshi, found in Bos taurus (Bovine).